Consider the following 434-residue polypeptide: GTPase Obg (434 aa).

An Obg domain is found at 1–158 (MFLDTAKIKV…RELQLELKIL (158 aa)). Positions 159–336 (ADVGLVGFPS…LLDATAELLD (178 aa)) constitute an OBG-type G domain. GTP-binding positions include 165–172 (GFPSVGKS), 190–194 (FTTIV), 212–215 (DLPG), 282–285 (NKMD), and 317–319 (SGL). 2 residues coordinate Mg(2+): serine 172 and threonine 192. One can recognise an OCT domain in the interval 356–434 (GFDEEEKAFE…IGKFEFEFVD (79 aa)).

Belongs to the TRAFAC class OBG-HflX-like GTPase superfamily. OBG GTPase family. As to quaternary structure, monomer. Mg(2+) is required as a cofactor.

The protein localises to the cytoplasm. Functionally, an essential GTPase which binds GTP, GDP and possibly (p)ppGpp with moderate affinity, with high nucleotide exchange rates and a fairly low GTP hydrolysis rate. Plays a role in control of the cell cycle, stress response, ribosome biogenesis and in those bacteria that undergo differentiation, in morphogenesis control. This chain is GTPase Obg, found in Streptococcus pneumoniae (strain Hungary19A-6).